The sequence spans 773 residues: 4'-phosphopantetheine phosphatase (773 aa).

At Ala-2 the chain carries N-acetylalanine. The tract at residues 2–402 (AECRASGGGS…APELCPTQRA (401 aa)) is pantothenate kinase. Acetyl-CoA-binding residues include Ser-196 and Ser-199. Tyr-320 bears the 3'-nitrotyrosine mark. The segment at 403-773 (RSGTFDLLEM…VIFKYEVPAE (371 aa)) is 4'-phosphopantetheine phosphatase. Position 404 is a phosphoserine (Ser-404). Phosphothreonine is present on Thr-406. Mn(2+)-binding residues include Asp-623, Asn-624, and Asp-659. Positions 724-728 (EGMGR) match the Subfamily II EGMGR motif motif.

It in the N-terminal section; belongs to the type II pantothenate kinase family. The protein in the C-terminal section; belongs to the damage-control phosphatase family. Phosphopantetheine phosphatase (II) subfamily. Homodimer. Interacts with PKM. Mn(2+) is required as a cofactor. It depends on Ni(2+) as a cofactor.

The protein resides in the cytoplasm. The enzyme catalyses (R)-4'-phosphopantetheine + H2O = (R)-pantetheine + phosphate. It carries out the reaction (R)-4'-phosphopantetheine sulfonate + H2O = (R)-pantetheine sulfonate + phosphate. It catalyses the reaction (R)-4'-phospho-S-sulfopantetheine + H2O = (R)-S-sulfopantetheine + phosphate. With respect to regulation, activity is strongly promoted by Co(2+), Ni(2+), Mg(2+) and Mn(2+). Activity is inhibited by EDTA. Its function is as follows. Phosphatase which shows a preference for 4'-phosphopantetheine and its oxidatively damaged forms (sulfonate or S-sulfonate), providing strong indirect evidence that the phosphatase activity pre-empts damage in the coenzyme A (CoA) pathway. Hydrolyzing excess 4'-phosphopantetheine could constitute a directed overflow mechanism to prevent its oxidation to the S-sulfonate, sulfonate, or other forms. Hydrolyzing 4'-phosphopantetheine sulfonate or S-sulfonate would forestall their conversion to inactive forms of CoA and acyl carrier protein. May play a role in the physiological regulation of CoA intracellular levels. The protein is 4'-phosphopantetheine phosphatase of Rattus norvegicus (Rat).